Here is a 289-residue protein sequence, read N- to C-terminus: Protease HtpX homolog (289 aa).

Helical transmembrane passes span 7-26 (TAAL…YWVI) and 31-48 (GLII…FSWY). Residue H132 participates in Zn(2+) binding. E133 is an active-site residue. H136 is a binding site for Zn(2+). A run of 2 helical transmembrane segments spans residues 151 to 171 (VAGA…FGGG) and 182 to 202 (LGVL…QLAI). E207 contributes to the Zn(2+) binding site.

Belongs to the peptidase M48B family. It depends on Zn(2+) as a cofactor.

The protein localises to the cell inner membrane. This chain is Protease HtpX homolog, found in Nostoc punctiforme (strain ATCC 29133 / PCC 73102).